A 256-amino-acid chain; its full sequence is Dihydromonacolin L-[lovastatin nonaketide synthase] thioesterase (256 aa).

Residues Ser-122, Asp-201, and His-229 each act as charge relay system in the active site.

This sequence belongs to the LovG family.

It catalyses the reaction dihydromonacolin L-[lovastatin nonaketide synthase] + H2O = holo-[lovastatin nonaketide synthase] + dihydromonacolin L carboxylate + H(+). It functions in the pathway polyketide biosynthesis; lovastatin biosynthesis. Functionally, esterase; part of the gene cluster that mediates the biosynthesis of lovastatin (also known as mevinolin, mevacor or monacolin K), a hypolipidemic inhibitor of (3S)-hydroxymethylglutaryl-coenzyme A (HMG-CoA) reductase (HMGR). The first step in the biosynthesis of lovastatin is the production of dihydromonacolin L acid by the lovastatin nonaketide synthase lovB and the trans-acting enoyl reductase lovC via condensation of one acetyl-CoA unit and 8 malonyl-CoA units. Dihydromonacolin L acid is released from lovB by the thioesterase lovG. Next, dihydromonacolin L acid is oxidized by the dihydromonacolin L monooxygenase lovA twice to form monacolin J acid. The 2-methylbutyrate moiety of lovastatin is synthesized by the lovastatin diketide synthase lovF via condensation of one acetyl-CoA unit and one malonyl-CoA unit. Finally, the covalent attachment of this moiety to monacolin J acid is catalyzed by the transesterase lovD to yield lovastatin. LovD has broad substrate specificity and can also convert monacolin J to simvastatin using alpha-dimethylbutanoyl-S-methyl-3-mercaptopropionate (DMB-S-MMP) as the thioester acyl donor, and can also catalyze the reverse reaction and function as hydrolase in vitro. LovD has much higher activity with LovF-bound 2-methylbutanoate than with free diketide substrates. In terms of biological role, esterase that catalyzes the release of covalently bound dihydromonacolin L from LovB during lovastatin biosynthesis. This Aspergillus terreus protein is Dihydromonacolin L-[lovastatin nonaketide synthase] thioesterase.